Here is a 434-residue protein sequence, read N- to C-terminus: Glutamate-1-semialdehyde 2,1-aminomutase 1 (434 aa).

The residue at position 270 (K270) is an N6-(pyridoxal phosphate)lysine.

Belongs to the class-III pyridoxal-phosphate-dependent aminotransferase family. HemL subfamily. In terms of assembly, homodimer. Pyridoxal 5'-phosphate serves as cofactor.

The protein resides in the cytoplasm. It catalyses the reaction (S)-4-amino-5-oxopentanoate = 5-aminolevulinate. Its pathway is porphyrin-containing compound metabolism; protoporphyrin-IX biosynthesis; 5-aminolevulinate from L-glutamyl-tRNA(Glu): step 2/2. The protein is Glutamate-1-semialdehyde 2,1-aminomutase 1 of Bacillus anthracis (strain A0248).